A 68-amino-acid chain; its full sequence is Beta-defensin 1 (68 aa).

The first 21 residues, 1 to 21 (MRTSYLLLFTLCLLLSEMASG), serve as a signal peptide directing secretion. A propeptide spanning residues 22–32 (DNFLTGLGHRS) is cleaved from the precursor. Intrachain disulfides connect Cys37/Cys66, Cys44/Cys59, and Cys49/Cys67.

This sequence belongs to the beta-defensin family. Monomer. Homodimer.

It is found in the secreted. The protein resides in the membrane. In terms of biological role, has bactericidal activity. May act as a ligand for C-C chemokine receptor CCR6. Positively regulates the sperm motility and bactericidal activity in a CCR6-dependent manner. Binds to CCR6 and triggers Ca2+ mobilization in the sperm which is important for its motility. In Allochrocebus preussi (Preuss's monkey), this protein is Beta-defensin 1 (DEFB1).